We begin with the raw amino-acid sequence, 322 residues long: Probable 5-dehydro-4-deoxyglucarate dehydratase 2 (322 aa).

It belongs to the DapA family.

It catalyses the reaction 5-dehydro-4-deoxy-D-glucarate + H(+) = 2,5-dioxopentanoate + CO2 + H2O. It participates in carbohydrate acid metabolism; D-glucarate degradation; 2,5-dioxopentanoate from D-glucarate: step 2/2. In Streptomyces coelicolor (strain ATCC BAA-471 / A3(2) / M145), this protein is Probable 5-dehydro-4-deoxyglucarate dehydratase 2.